The following is a 126-amino-acid chain: Large ribosomal subunit protein bL12 (126 aa).

This sequence belongs to the bacterial ribosomal protein bL12 family. As to quaternary structure, homodimer. Part of the ribosomal stalk of the 50S ribosomal subunit. Forms a multimeric L10(L12)X complex, where L10 forms an elongated spine to which 2 to 4 L12 dimers bind in a sequential fashion. Binds GTP-bound translation factors.

Forms part of the ribosomal stalk which helps the ribosome interact with GTP-bound translation factors. Is thus essential for accurate translation. This is Large ribosomal subunit protein bL12 from Desulfatibacillum aliphaticivorans.